We begin with the raw amino-acid sequence, 456 residues long: Bifunctional protein GlmU (456 aa).

Residues 1 to 229 (MLNSAMSVVI…ISETDGVNNR (229 aa)) form a pyrophosphorylase region. UDP-N-acetyl-alpha-D-glucosamine is bound by residues 11 to 14 (LAAG), Lys25, Gln76, 81 to 82 (GT), 103 to 105 (YGD), Gly140, Glu154, Asn169, and Asn227. Mg(2+) is bound at residue Asp105. A Mg(2+)-binding site is contributed by Asn227. The interval 230–250 (LQLSRLERIYQAEQAEKLLLS) is linker. The segment at 251 to 456 (GVMLRDPARF…QGWQRPVKKK (206 aa)) is N-acetyltransferase. Residues Arg333 and Lys351 each coordinate UDP-N-acetyl-alpha-D-glucosamine. His363 functions as the Proton acceptor in the catalytic mechanism. Positions 366 and 377 each coordinate UDP-N-acetyl-alpha-D-glucosamine. Residues Ala380, 386-387 (NY), Ser405, Ala423, and Arg440 each bind acetyl-CoA.

In the N-terminal section; belongs to the N-acetylglucosamine-1-phosphate uridyltransferase family. The protein in the C-terminal section; belongs to the transferase hexapeptide repeat family. In terms of assembly, homotrimer. The cofactor is Mg(2+).

The protein resides in the cytoplasm. The enzyme catalyses alpha-D-glucosamine 1-phosphate + acetyl-CoA = N-acetyl-alpha-D-glucosamine 1-phosphate + CoA + H(+). It carries out the reaction N-acetyl-alpha-D-glucosamine 1-phosphate + UTP + H(+) = UDP-N-acetyl-alpha-D-glucosamine + diphosphate. The protein operates within nucleotide-sugar biosynthesis; UDP-N-acetyl-alpha-D-glucosamine biosynthesis; N-acetyl-alpha-D-glucosamine 1-phosphate from alpha-D-glucosamine 6-phosphate (route II): step 2/2. It functions in the pathway nucleotide-sugar biosynthesis; UDP-N-acetyl-alpha-D-glucosamine biosynthesis; UDP-N-acetyl-alpha-D-glucosamine from N-acetyl-alpha-D-glucosamine 1-phosphate: step 1/1. It participates in bacterial outer membrane biogenesis; LPS lipid A biosynthesis. Its function is as follows. Catalyzes the last two sequential reactions in the de novo biosynthetic pathway for UDP-N-acetylglucosamine (UDP-GlcNAc). The C-terminal domain catalyzes the transfer of acetyl group from acetyl coenzyme A to glucosamine-1-phosphate (GlcN-1-P) to produce N-acetylglucosamine-1-phosphate (GlcNAc-1-P), which is converted into UDP-GlcNAc by the transfer of uridine 5-monophosphate (from uridine 5-triphosphate), a reaction catalyzed by the N-terminal domain. In Salmonella choleraesuis (strain SC-B67), this protein is Bifunctional protein GlmU.